The chain runs to 436 residues: Prenyltransferase nscD (436 aa).

It belongs to the tryptophan dimethylallyltransferase family.

It functions in the pathway secondary metabolite biosynthesis. Prenyltransferase; part of the gene cluster that mediates the biosynthesis of neosartoricin B, a prenylated anthracenone that probably exhibits T-cell antiproliferative activity, suggestive of a physiological role as an immunosuppressive agent. The non-reducing polyketide synthase nscA probably synthesizes and cyclizes the decaketide backbone. The hydrolase nscB then mediates the product release through hydrolysis followed by spontaneous decarboxylation. The prenyltransferase nscD catalyzes the addition of the dimethylallyl group to the aromatic C5. The FAD-dependent monooxygenase nscC is then responsible for the stereospecific hydroxylation at C2. Neosartoricin B can be converted into two additional compounds neosartoricins C and D. Neosartoricin C is a spirocyclic compound that is cyclized through the attack of C3 hydroxyl on C14, followed by dehydration. On the other hand, neosartoricin D is a further cyclized compound in which attack of C2 on C14 in neosartoricin C results in the formation of the acetal-containing dioxabicyclo-octanone ring. Both of these compounds are novel and possibly represent related metabolites of the gene cluster. In Arthroderma benhamiae (strain ATCC MYA-4681 / CBS 112371) (Trichophyton mentagrophytes), this protein is Prenyltransferase nscD.